The primary structure comprises 266 residues: Small ribosomal subunit protein uS3 (266 aa).

The KH type-2 domain occupies 39 to 107; the sequence is VREYLKKKLK…PVHVNIEEIR (69 aa). A disordered region spans residues 218 to 266; sequence EVAEDKRPRRNARPGDRRPRRDGEGGAPGARRGAPRRGAGKPEDGKTGE. 2 stretches are compositionally biased toward basic and acidic residues: residues 230–241 and 257–266; these read RPGDRRPRRDGE and GKPEDGKTGE.

This sequence belongs to the universal ribosomal protein uS3 family. As to quaternary structure, part of the 30S ribosomal subunit. Forms a tight complex with proteins S10 and S14.

Its function is as follows. Binds the lower part of the 30S subunit head. Binds mRNA in the 70S ribosome, positioning it for translation. In Burkholderia multivorans (strain ATCC 17616 / 249), this protein is Small ribosomal subunit protein uS3.